The chain runs to 417 residues: Monooxygenase cfoF (417 aa).

FAD is bound by residues 45–48 (DRDK), arginine 126, and aspartate 327. A compositionally biased stretch (basic and acidic residues) spans 389–399 (AHTTQLDRDQF). The interval 389-417 (AHTTQLDRDQFTDGSGANDFLVGQQHSDK) is disordered.

It belongs to the aromatic-ring hydroxylase family. KMO subfamily. FAD is required as a cofactor.

Its pathway is secondary metabolite biosynthesis; flavonoid biosynthesis. Monooxygenase; part of the gene cluster that mediates the biosynthesis of chlorflavonin, a fungal flavonoid with acetolactate synthase inhibitory activity. Within the pathway, cfoF is responsible for the hydroxylation of the flavonoid skeleton at position C3. The pathway begins with the PKS-NRPS hybrid synthetase cfoA that uses benzoic acid or p-hydroxybenzoic acid as a starter unit with four rounds of chain elongation using malonyl-CoA to form the chalcone skeleton. Then, a new type of chalcone isomerase, cfoK, catalyzes the conversion of the chalcone into a flavanone by a histidine-mediated oxa-Michael addition mechanism. The desaturation of flavanone to flavone is catalyzed by a new type of flavone synthase, the flavin mononucleotide (FMN)-dependent oxidoreductase cfoJ. Monooxygenases cfoF, cfoG, and P450 cfoH are responsible for the hydroxylation of the flavonoid skeleton at sites C3, C8, and C2', respectively. Like cfoF, the dehydratase cfoI plays also a role in the hydroxylation of position C3. Methyltransferases cfoB, cfoC, and cfoD then catalyze the methylation of C7-OH, C8-OH, and C3-OH, respectively. Finally, the monooxygenase cfoE is responsible for the chlorination of flavonoid at position C3'. This chain is Monooxygenase cfoF, found in Aspergillus candidus.